Here is a 556-residue protein sequence, read N- to C-terminus: TNF receptor-associated factor 6-A (556 aa).

The segment at 72-111 (CPICLMALREAVQTPCGHRFCKACILKSLRNAGHKCPVDN) adopts an RING-type; degenerate zinc-finger fold. 2 consecutive TRAF-type zinc fingers follow at residues 148-204 (RHLE…EDKS) and 205-261 (GHEL…HNLA). In terms of domain architecture, MATH spans 384-533 (NGVFIWRIKG…NDTLLVRCSV (150 aa)).

This sequence belongs to the TNF receptor-associated factor family. A subfamily. In terms of assembly, homotrimer. Homooligomer. Interacts with tifa. As to expression, highly expressed in ovary and moderately expressed in kidney, spleen, stomach, colon and testis.

Its subcellular location is the cytoplasm. The protein resides in the cell cortex. It is found in the nucleus. The protein localises to the lipid droplet. It catalyses the reaction S-ubiquitinyl-[E2 ubiquitin-conjugating enzyme]-L-cysteine + [acceptor protein]-L-lysine = [E2 ubiquitin-conjugating enzyme]-L-cysteine + N(6)-ubiquitinyl-[acceptor protein]-L-lysine.. It functions in the pathway protein modification; protein ubiquitination. Its function is as follows. E3 ubiquitin ligase that, together with UBE2N and UBE2V1, mediates the synthesis of 'Lys-63'-linked-polyubiquitin chains conjugated to proteins, such as IKBKG, IRAK1, AKT1 and AKT2. Also mediates ubiquitination of free/unanchored polyubiquitin chain that leads to MAP3K7 activation. The chain is TNF receptor-associated factor 6-A (traf6-a) from Xenopus laevis (African clawed frog).